The following is a 256-amino-acid chain: Matrix protein (256 aa).

The protein belongs to the pneumovirinae M protein family. In terms of assembly, forms dimers. Forms higher-order oligomers. Interacts with glycoprotein G (via N-terminus). Interacts with protein M2-1; this interaction directs the matrix protein localization to cytoplasmic inclusions comprising viral proteins L, N, P, and M2-1 and mediates the matrix protein association with the nucleocapsid.

It localises to the virion. The protein localises to the host cytoplasm. Its subcellular location is the host nucleus. It is found in the host cell membrane. Plays a crucial role in virus assembly into filaments and budding. Early in infection, localizes in the nucleus where it may inhibit host cell transcription. Later in infection, traffics to the cytoplasm to associate with inclusion bodies, the site of viral transcription and replication. During virus assembly and budding, acts as a bridge between the nucleocapsid and the lipid bilayer. This chain is Matrix protein (M), found in Ovine respiratory syncytial virus (strain WSU 83-1578) (ORSV).